The primary structure comprises 146 residues: Anti-sigma F factor (146 aa).

It belongs to the anti-sigma-factor family.

It carries out the reaction L-seryl-[protein] + ATP = O-phospho-L-seryl-[protein] + ADP + H(+). It catalyses the reaction L-threonyl-[protein] + ATP = O-phospho-L-threonyl-[protein] + ADP + H(+). In terms of biological role, binds to sigma F and blocks its ability to form an RNA polymerase holoenzyme (E-sigma F). Phosphorylates SpoIIAA on a serine residue. This phosphorylation may enable SpoIIAA to act as an anti-anti-sigma factor that counteracts SpoIIAB and thus releases sigma F from inhibition. The protein is Anti-sigma F factor of Geobacillus kaustophilus (strain HTA426).